Here is a 162-residue protein sequence, read N- to C-terminus: Small ribosomal subunit protein uS7m (162 aa).

It belongs to the universal ribosomal protein uS7 family. As to quaternary structure, part of the small ribosomal subunit.

Its subcellular location is the mitochondrion. Its function is as follows. One of the primary rRNA binding proteins, it binds directly to 16S-like rRNA where it nucleates assembly of the head domain of the small subunit. In Dictyostelium citrinum (Slime mold), this protein is Small ribosomal subunit protein uS7m (mrps7).